The chain runs to 204 residues: dTTP/UTP pyrophosphatase (204 aa).

Asp68 acts as the Proton acceptor in catalysis.

The protein belongs to the Maf family. YhdE subfamily. A divalent metal cation is required as a cofactor.

The protein resides in the cytoplasm. It catalyses the reaction dTTP + H2O = dTMP + diphosphate + H(+). The catalysed reaction is UTP + H2O = UMP + diphosphate + H(+). In terms of biological role, nucleoside triphosphate pyrophosphatase that hydrolyzes dTTP and UTP. May have a dual role in cell division arrest and in preventing the incorporation of modified nucleotides into cellular nucleic acids. This is dTTP/UTP pyrophosphatase from Thermotoga maritima (strain ATCC 43589 / DSM 3109 / JCM 10099 / NBRC 100826 / MSB8).